A 53-amino-acid polypeptide reads, in one-letter code: Light-harvesting protein B-808/866 beta chain (53 aa).

M1 carries the N-formylmethionine modification. The Cytoplasmic portion of the chain corresponds to 1–25 (MRDDDDLVPPKWRPLFNNQDWLLHD). A bacteriochlorophyll contacts are provided by H24 and H42. Residues 26–48 (IVVKSFYGFGVIAAIAHLLVYLW) traverse the membrane as a helical segment. Residues 49 to 53 (KPWLP) lie on the Periplasmic side of the membrane.

It belongs to the antenna complex beta subunit family. In terms of assembly, the core complex is formed by different alpha and beta chains, binding bacteriochlorophyll molecules, and arranged most probably in tetrameric structures disposed around the reaction center. The non-pigmented gamma chains may constitute additional components.

It localises to the cell membrane. Functionally, antenna complexes are light-harvesting systems, which transfer the excitation energy to the reaction centers. In Chloroflexus aurantiacus (strain ATCC 29366 / DSM 635 / J-10-fl), this protein is Light-harvesting protein B-808/866 beta chain (puf2B).